A 56-amino-acid polypeptide reads, in one-letter code: Meucin-25 (56 aa).

Positions 1–31 (MFRIEYSLVQLLLRNVTIPLLLIIQMHIMSS) are cleaved as a signal peptide.

Belongs to the non-disulfide-bridged peptide (NDBP) superfamily. Antimalarial peptide (group 5) family. As to expression, expressed by the venom gland.

The protein resides in the secreted. Its function is as follows. This synthetic cationic peptide inhibits the development of Plasmodium berghei ookinetes, kills intraerythrocytic P.falciparum, and is cytotoxic to the Drosophila S2 cell at micromolar concentrations. No antibacterial, antifungal and hemolytic activities have been found at micromolar concentrations. This chain is Meucin-25, found in Mesobuthus eupeus (Lesser Asian scorpion).